The chain runs to 514 residues: MKYRDLRDFLAQLERQGELKRITAPVSTRLEMTEIADRVLRAGGPALLFENARHNDAPADMPVLANLFGTPRRVAWGMGADDVGALRETGELLASLREPEAPKGLRDALAKVSMLKAALWDMSPKTVRSAACQEIVWEGADVDLGRLPIQTCWPGDVAPLLAWGLVITRGPNARRQNLGIYRQQPLGPNKLIMRWLSHRGGALDFRDHAQAHPGKSFPIAVALGADPATILDAVTPVPDTLSEYQFAGLLRGSRTEVVKALGSDLSVPASAEIVLEGHLLPADDPRAVAAAVPEGANPPPATGYEMALEGPYGDHTGYYNEQDWFPVFTVDRITMRRNPIYHSTYTGKPPDEPAVLGVALNEVFVPLLRRQLPEIVDFYLPPEGCSYRLAVVSIRKQYAGHAKRVMFGLWSVLRQFMYTKFIVVVDEDIDPRDWTEVVWAMTTRMDPVRDTVLVENTPIDYLDFASPVSGLGGKMGLDATNKWPGETSREWGTPIHMDEAVKRRVDAMWDTLGL.

Residue Asn-177 participates in Mn(2+) binding. Residues 180-182, 194-196, and 199-200 contribute to the prenylated FMN site; these read IYR, RWL, and RG. Position 243 (Glu-243) interacts with Mn(2+). Asp-314 functions as the Proton donor in the catalytic mechanism.

This sequence belongs to the UbiD family. Homohexamer. Prenylated FMN is required as a cofactor. The cofactor is Mn(2+).

Its subcellular location is the cell membrane. The enzyme catalyses a 4-hydroxy-3-(all-trans-polyprenyl)benzoate + H(+) = a 2-(all-trans-polyprenyl)phenol + CO2. It functions in the pathway cofactor biosynthesis; ubiquinone biosynthesis. Catalyzes the decarboxylation of 3-octaprenyl-4-hydroxy benzoate to 2-octaprenylphenol, an intermediate step in ubiquinone biosynthesis. This Bordetella parapertussis (strain 12822 / ATCC BAA-587 / NCTC 13253) protein is 3-octaprenyl-4-hydroxybenzoate carboxy-lyase.